The following is a 515-amino-acid chain: Maturase K (515 aa).

The protein belongs to the intron maturase 2 family. MatK subfamily.

The protein resides in the plastid. It localises to the chloroplast. In terms of biological role, usually encoded in the trnK tRNA gene intron. Probably assists in splicing its own and other chloroplast group II introns. This is Maturase K from Zingiber officinale (Ginger).